Here is a 316-residue protein sequence, read N- to C-terminus: Beta-ketoacyl-[acyl-carrier-protein] synthase III 4 (316 aa).

Catalysis depends on residues cysteine 114 and histidine 242. Residues 243–247 (QANLR) form an ACP-binding region. Asparagine 272 is a catalytic residue.

This sequence belongs to the thiolase-like superfamily. FabH family. In terms of assembly, homodimer.

It is found in the cytoplasm. It catalyses the reaction malonyl-[ACP] + acetyl-CoA + H(+) = 3-oxobutanoyl-[ACP] + CO2 + CoA. It participates in lipid metabolism; fatty acid biosynthesis. Functionally, catalyzes the condensation reaction of fatty acid synthesis by the addition to an acyl acceptor of two carbons from malonyl-ACP. Catalyzes the first condensation reaction which initiates fatty acid synthesis and may therefore play a role in governing the total rate of fatty acid production. Possesses both acetoacetyl-ACP synthase and acetyl transacylase activities. Its substrate specificity determines the biosynthesis of branched-chain and/or straight-chain of fatty acids. The sequence is that of Beta-ketoacyl-[acyl-carrier-protein] synthase III 4 from Streptomyces coelicolor (strain ATCC BAA-471 / A3(2) / M145).